Here is a 157-residue protein sequence, read N- to C-terminus: Transcription elongation factor GreA (157 aa).

Positions 12–74 (LKKLEEELEY…TLEAMLKNAK (63 aa)) form a coiled coil.

It belongs to the GreA/GreB family.

Its function is as follows. Necessary for efficient RNA polymerase transcription elongation past template-encoded arresting sites. The arresting sites in DNA have the property of trapping a certain fraction of elongating RNA polymerases that pass through, resulting in locked ternary complexes. Cleavage of the nascent transcript by cleavage factors such as GreA or GreB allows the resumption of elongation from the new 3'terminus. GreA releases sequences of 2 to 3 nucleotides. In Thermoanaerobacter pseudethanolicus (strain ATCC 33223 / 39E) (Clostridium thermohydrosulfuricum), this protein is Transcription elongation factor GreA.